The following is a 308-amino-acid chain: MHPTRSFQGLILTLHNYWAEHGCAILQPYDMEVGAGTFHPATTLRSLGPKPWKAAYVQPSRRPKDGRYGENPNRLQHYYQYQVLIKPSPPNLQDLYLGSLKAIGLDPTLHDVRFVEDDWESPTLGAWGLGWECWCDGMEVSQFTYFQQVCGIECSPVAGELTYGLERLAMYVQGVDNVYDLNFNGLEGDEKVTYGDVFLQAEQEYSRYNFEMANTETLHQHFIDAERECEAILKAGSTGENSLHKCVFPAYDQCIKASHVFNLMDARGVISVTERQSYILRVRNLARQCGEAFLLTDAGGFNFKREGE.

Belongs to the class-II aminoacyl-tRNA synthetase family. Tetramer of two alpha and two beta subunits.

It localises to the cytoplasm. It catalyses the reaction tRNA(Gly) + glycine + ATP = glycyl-tRNA(Gly) + AMP + diphosphate. This chain is Glycine--tRNA ligase alpha subunit, found in Brucella canis (strain ATCC 23365 / NCTC 10854 / RM-666).